The primary structure comprises 727 residues: Translation initiation factor IF-2, mitochondrial (727 aa).

The N-terminal 29 residues, 1-29 (MNQKLLKLENLLRFHTIYRQLHSLCQRRA), are a transit peptide targeting the mitochondrion. The region spanning 178–348 (PRSPVVTIMG…VALAEMLELK (171 aa)) is the tr-type G domain. Residues 187-194 (GHVDHGKT) are G1. 187 to 194 (GHVDHGKT) is a GTP binding site. The interval 212 to 216 (GITQH) is G2. GTP is bound by residues 234 to 237 (DTPG) and 288 to 291 (NKCD). Residues 234–237 (DTPG) are G3. The tract at residues 288–291 (NKCD) is G4. The interval 324–326 (SAL) is G5. Residue T688 is modified to Phosphothreonine.

It belongs to the TRAFAC class translation factor GTPase superfamily. Classic translation factor GTPase family. IF-2 subfamily. Monomer. In terms of tissue distribution, expressed in all tissues examined. Highest level in skeletal muscle.

The protein localises to the mitochondrion. Its function is as follows. One of the essential components for the initiation of protein synthesis. Protects formylmethionyl-tRNA from spontaneous hydrolysis and promotes its binding to the 30S ribosomal subunits. Also involved in the hydrolysis of GTP during the formation of the 70S ribosomal complex. This Homo sapiens (Human) protein is Translation initiation factor IF-2, mitochondrial (MTIF2).